Here is a 76-residue protein sequence, read N- to C-terminus: Esculentin-2CG1 (76 aa).

Positions 1 to 22 are cleaved as a signal peptide; that stretch reads MFTMKKSMLLLFFLGTISLSLC. A propeptide spans 23–37 (removed in mature form); that stretch reads EEERSADEDDGEEEV. Cysteine 70 and cysteine 76 are disulfide-bonded.

Expressed by the skin glands.

The protein resides in the secreted. Its function is as follows. Antimicrobial peptide active against a variety of Gram-positive and some Gram-negative bacterial strains. Has antifungal activity against a slime mold isolate. Has hemolytic activity against human erythrocytes. This chain is Esculentin-2CG1, found in Amolops chunganensis (Chungan torrent frog).